A 145-amino-acid polypeptide reads, in one-letter code: D-aminoacyl-tRNA deacylase (145 aa).

The Gly-cisPro motif, important for rejection of L-amino acids motif lies at 137–138 (GP).

The protein belongs to the DTD family. As to quaternary structure, homodimer.

The protein localises to the cytoplasm. It carries out the reaction glycyl-tRNA(Ala) + H2O = tRNA(Ala) + glycine + H(+). It catalyses the reaction a D-aminoacyl-tRNA + H2O = a tRNA + a D-alpha-amino acid + H(+). An aminoacyl-tRNA editing enzyme that deacylates mischarged D-aminoacyl-tRNAs. Also deacylates mischarged glycyl-tRNA(Ala), protecting cells against glycine mischarging by AlaRS. Acts via tRNA-based rather than protein-based catalysis; rejects L-amino acids rather than detecting D-amino acids in the active site. By recycling D-aminoacyl-tRNA to D-amino acids and free tRNA molecules, this enzyme counteracts the toxicity associated with the formation of D-aminoacyl-tRNA entities in vivo and helps enforce protein L-homochirality. This Shewanella baltica (strain OS195) protein is D-aminoacyl-tRNA deacylase.